A 419-amino-acid chain; its full sequence is Serine hydroxymethyltransferase (419 aa).

(6S)-5,6,7,8-tetrahydrofolate contacts are provided by residues Leu-121 and 125–127; that span reads GHL. Lys-230 is subject to N6-(pyridoxal phosphate)lysine. Residue 355-357 coordinates (6S)-5,6,7,8-tetrahydrofolate; it reads SPF.

This sequence belongs to the SHMT family. Homodimer. The cofactor is pyridoxal 5'-phosphate.

The protein resides in the cytoplasm. It carries out the reaction (6R)-5,10-methylene-5,6,7,8-tetrahydrofolate + glycine + H2O = (6S)-5,6,7,8-tetrahydrofolate + L-serine. It participates in one-carbon metabolism; tetrahydrofolate interconversion. It functions in the pathway amino-acid biosynthesis; glycine biosynthesis; glycine from L-serine: step 1/1. In terms of biological role, catalyzes the reversible interconversion of serine and glycine with tetrahydrofolate (THF) serving as the one-carbon carrier. This reaction serves as the major source of one-carbon groups required for the biosynthesis of purines, thymidylate, methionine, and other important biomolecules. Also exhibits THF-independent aldolase activity toward beta-hydroxyamino acids, producing glycine and aldehydes, via a retro-aldol mechanism. The chain is Serine hydroxymethyltransferase from Streptococcus uberis (strain ATCC BAA-854 / 0140J).